Here is a 101-residue protein sequence, read N- to C-terminus: Large ribosomal subunit protein uL24 (101 aa).

It belongs to the universal ribosomal protein uL24 family. In terms of assembly, part of the 50S ribosomal subunit.

Its function is as follows. One of two assembly initiator proteins, it binds directly to the 5'-end of the 23S rRNA, where it nucleates assembly of the 50S subunit. One of the proteins that surrounds the polypeptide exit tunnel on the outside of the subunit. This chain is Large ribosomal subunit protein uL24, found in Streptococcus sanguinis (strain SK36).